The sequence spans 120 residues: MTRQPHKQRNRQERAALHEKQKQVRAPLSPELREEYGQRNVRVNAGDTVEVQRGDFAGESGEVVTVDLRAAEIHVEDVTQETADGEEVPRPLEASNVQVTELDLEDEVREARLESEEDNE.

The disordered stretch occupies residues 1–33 (MTRQPHKQRNRQERAALHEKQKQVRAPLSPELR). Residues 10 to 22 (NRQERAALHEKQK) are compositionally biased toward basic and acidic residues.

Belongs to the universal ribosomal protein uL24 family. As to quaternary structure, part of the 50S ribosomal subunit.

In terms of biological role, one of two assembly initiator proteins, it binds directly to the 5'-end of the 23S rRNA, where it nucleates assembly of the 50S subunit. Its function is as follows. Located at the polypeptide exit tunnel on the outside of the subunit. This chain is Large ribosomal subunit protein uL24, found in Natronomonas pharaonis (strain ATCC 35678 / DSM 2160 / CIP 103997 / JCM 8858 / NBRC 14720 / NCIMB 2260 / Gabara) (Halobacterium pharaonis).